The sequence spans 272 residues: Rhomboid-type serine protease B (272 aa).

The next 5 helical transmembrane spans lie at 30–50, 72–92, 103–123, 133–153, and 164–184; these read IVLL…WSVV, PFIH…TPLL, TAVA…YILV, AVVG…IKTF, and TKIP…IFVP. The Nucleophile role is filled by Ser138. A glycan (N-linked (GlcNAc...) asparagine) is linked at Asn185. A helical membrane pass occupies residues 186–206; it reads TSFLGHLSAIIIGYLLGLGYL. His191 is a catalytic residue.

Belongs to the peptidase S54 family.

The protein resides in the membrane. It carries out the reaction Cleaves type-1 transmembrane domains using a catalytic dyad composed of serine and histidine that are contributed by different transmembrane domains.. Rhomboid protease that catalyzes intramembrane proteolysis. Required for transcription factor srbA activation by mediating its release from the membrane and thereby regulating its activity under hypoxic conditions. Essential for iron homeostasis and resistance to azoles such as voriconazole. Required for virulence in murine models of invasive pulmonary aspergillosis (IPA). This Aspergillus fumigatus (strain CBS 144.89 / FGSC A1163 / CEA10) (Neosartorya fumigata) protein is Rhomboid-type serine protease B.